Reading from the N-terminus, the 59-residue chain is Small ribosomal subunit protein bS21 (59 aa).

The segment at 39 to 59 (ETPVEKYKRKQRLKNRTKRRR) is disordered. The span at 45–59 (YKRKQRLKNRTKRRR) shows a compositional bias: basic residues.

The protein belongs to the bacterial ribosomal protein bS21 family.

The sequence is that of Small ribosomal subunit protein bS21 from Prochlorococcus marinus (strain SARG / CCMP1375 / SS120).